A 413-amino-acid chain; its full sequence is Clamp protein VP6 (413 aa).

It belongs to the reoviridae clamp protein family. In terms of assembly, interacts with capsid proteins VP3, VP4 and VP7.

The protein localises to the virion. Functionally, located at the interface of the incomplete T=13 outer capsid and the pseudo T=2 inner capsid, 120 VP6 subunits clamp and stabilize the inner capsid shell. This Ctenopharyngodon idella (Grass carp) protein is Clamp protein VP6 (S8).